A 709-amino-acid chain; its full sequence is ATP-dependent zinc metalloprotease YME1 homolog (709 aa).

Positions 152–182 are disordered; sequence FTSDTSSTVSSTPSLNHSLQNSMPPSTPTPP. The segment covering 153–165 has biased composition (low complexity); it reads TSDTSSTVSSTPS. A helical membrane pass occupies residues 217–239; it reads IFKFIAGLSVASYFVLLGMSIFA. Position 307–314 (307–314) interacts with ATP; that stretch reads GPPGTGKT. H530 contributes to the Zn(2+) binding site. E531 is an active-site residue. Zn(2+) contacts are provided by H534 and D608.

In the N-terminal section; belongs to the AAA ATPase family. The protein in the C-terminal section; belongs to the peptidase M41 family. Zn(2+) is required as a cofactor.

The protein resides in the mitochondrion membrane. Functionally, putative ATP-dependent protease. The protein is ATP-dependent zinc metalloprotease YME1 homolog of Schizosaccharomyces pombe (strain 972 / ATCC 24843) (Fission yeast).